Here is a 436-residue protein sequence, read N- to C-terminus: Na(+)/H(+) antiporter NhaA (436 aa).

Transmembrane regions (helical) follow at residues 31–51, 74–94, 112–132, 143–163, 173–193, 196–216, 222–242, 285–305, 315–335, 350–370, and 384–404; these read VGGA…NSPG, LSLG…IAGL, IVPI…YTLI, GWAI…AVIS, FLLT…AVFY, NLQP…TWAV, SWYL…ESGV, VAVP…WAGF, IGII…ATFL, WIDV…SLLI, and HAKV…TVIL.

This sequence belongs to the NhaA Na(+)/H(+) (TC 2.A.33) antiporter family.

Its subcellular location is the cell membrane. It catalyses the reaction Na(+)(in) + 2 H(+)(out) = Na(+)(out) + 2 H(+)(in). Its function is as follows. Na(+)/H(+) antiporter that extrudes sodium in exchange for external protons. The chain is Na(+)/H(+) antiporter NhaA from Renibacterium salmoninarum (strain ATCC 33209 / DSM 20767 / JCM 11484 / NBRC 15589 / NCIMB 2235).